Reading from the N-terminus, the 341-residue chain is S-adenosylmethionine:tRNA ribosyltransferase-isomerase (341 aa).

Belongs to the QueA family. Monomer.

Its subcellular location is the cytoplasm. The catalysed reaction is 7-aminomethyl-7-carbaguanosine(34) in tRNA + S-adenosyl-L-methionine = epoxyqueuosine(34) in tRNA + adenine + L-methionine + 2 H(+). It functions in the pathway tRNA modification; tRNA-queuosine biosynthesis. Its function is as follows. Transfers and isomerizes the ribose moiety from AdoMet to the 7-aminomethyl group of 7-deazaguanine (preQ1-tRNA) to give epoxyqueuosine (oQ-tRNA). The sequence is that of S-adenosylmethionine:tRNA ribosyltransferase-isomerase from Staphylococcus epidermidis (strain ATCC 35984 / DSM 28319 / BCRC 17069 / CCUG 31568 / BM 3577 / RP62A).